Here is a 201-residue protein sequence, read N- to C-terminus: Holliday junction branch migration complex subunit RuvA (201 aa).

The tract at residues 1-63 (MYDYIKGTVT…EDNISLFGFQ (63 aa)) is domain I. Residues 64 to 142 (TTEERYLFKK…DVVASEIVYV (79 aa)) form a domain II region. The segment at 143 to 153 (APENDMVAGLS) is flexible linker. Residues 153–201 (SPQLEEAVLALEALGYSTRELKKVIPKLAKEADLTSDAYIKLALQLMTK) form a domain III region.

This sequence belongs to the RuvA family. In terms of assembly, homotetramer. Forms an RuvA(8)-RuvB(12)-Holliday junction (HJ) complex. HJ DNA is sandwiched between 2 RuvA tetramers; dsDNA enters through RuvA and exits via RuvB. An RuvB hexamer assembles on each DNA strand where it exits the tetramer. Each RuvB hexamer is contacted by two RuvA subunits (via domain III) on 2 adjacent RuvB subunits; this complex drives branch migration. In the full resolvosome a probable DNA-RuvA(4)-RuvB(12)-RuvC(2) complex forms which resolves the HJ.

It is found in the cytoplasm. In terms of biological role, the RuvA-RuvB-RuvC complex processes Holliday junction (HJ) DNA during genetic recombination and DNA repair, while the RuvA-RuvB complex plays an important role in the rescue of blocked DNA replication forks via replication fork reversal (RFR). RuvA specifically binds to HJ cruciform DNA, conferring on it an open structure. The RuvB hexamer acts as an ATP-dependent pump, pulling dsDNA into and through the RuvAB complex. HJ branch migration allows RuvC to scan DNA until it finds its consensus sequence, where it cleaves and resolves the cruciform DNA. The chain is Holliday junction branch migration complex subunit RuvA from Listeria monocytogenes serovar 1/2a (strain ATCC BAA-679 / EGD-e).